A 510-amino-acid polypeptide reads, in one-letter code: ATP synthase subunit alpha (510 aa).

170-177 is a binding site for ATP; it reads GDRQTGKT.

This sequence belongs to the ATPase alpha/beta chains family. F-type ATPases have 2 components, CF(1) - the catalytic core - and CF(0) - the membrane proton channel. CF(1) has five subunits: alpha(3), beta(3), gamma(1), delta(1), epsilon(1). CF(0) has three main subunits: a(1), b(2) and c(9-12). The alpha and beta chains form an alternating ring which encloses part of the gamma chain. CF(1) is attached to CF(0) by a central stalk formed by the gamma and epsilon chains, while a peripheral stalk is formed by the delta and b chains.

The protein localises to the cell inner membrane. The catalysed reaction is ATP + H2O + 4 H(+)(in) = ADP + phosphate + 5 H(+)(out). In terms of biological role, produces ATP from ADP in the presence of a proton gradient across the membrane. The alpha chain is a regulatory subunit. The sequence is that of ATP synthase subunit alpha from Maricaulis maris (strain MCS10) (Caulobacter maris).